Here is a 427-residue protein sequence, read N- to C-terminus: UDP-N-acetylglucosamine--N-acetylmuramyl-(pentapeptide) pyrophosphoryl-undecaprenol N-acetylglucosamine transferase (427 aa).

UDP-N-acetyl-alpha-D-glucosamine contacts are provided by residues 29 to 31 (TGG), Asn-141, Arg-177, Ser-205, Ile-258, and Gln-303. A disordered region spans residues 408 to 427 (SLHPIPDSRFPIRTSAGGAQ).

The protein belongs to the glycosyltransferase 28 family. MurG subfamily.

It is found in the cell inner membrane. It catalyses the reaction di-trans,octa-cis-undecaprenyl diphospho-N-acetyl-alpha-D-muramoyl-L-alanyl-D-glutamyl-meso-2,6-diaminopimeloyl-D-alanyl-D-alanine + UDP-N-acetyl-alpha-D-glucosamine = di-trans,octa-cis-undecaprenyl diphospho-[N-acetyl-alpha-D-glucosaminyl-(1-&gt;4)]-N-acetyl-alpha-D-muramoyl-L-alanyl-D-glutamyl-meso-2,6-diaminopimeloyl-D-alanyl-D-alanine + UDP + H(+). The protein operates within cell wall biogenesis; peptidoglycan biosynthesis. Functionally, cell wall formation. Catalyzes the transfer of a GlcNAc subunit on undecaprenyl-pyrophosphoryl-MurNAc-pentapeptide (lipid intermediate I) to form undecaprenyl-pyrophosphoryl-MurNAc-(pentapeptide)GlcNAc (lipid intermediate II). This Xanthomonas campestris pv. campestris (strain B100) protein is UDP-N-acetylglucosamine--N-acetylmuramyl-(pentapeptide) pyrophosphoryl-undecaprenol N-acetylglucosamine transferase.